Consider the following 397-residue polypeptide: uncharacterized protein (397 aa).

Phosphoserine is present on residues Ser-115 and Ser-141. A disordered region spans residues 135–156; the sequence is NSLNHDSPPHTPARRSDNSTSK. Residue Lys-239 forms a Glycyl lysine isopeptide (Lys-Gly) (interchain with G-Cter in SUMO2) linkage. 2 positions are modified to phosphoserine: Ser-269 and Ser-296. A disordered region spans residues 289 to 316; sequence GRGPTKASPQPALTVKAKATSSATTLAS. Low complexity predominate over residues 300–316; it reads ALTVKAKATSSATTLAS. Ser-342 is subject to Phosphoserine. Positions 354-397 are disordered; it reads SEAQDSQVTSTKSPTVRCIVPDPPAPLASQRPPRRRWRRTCKDC. Residues 356-367 are compositionally biased toward polar residues; sequence AQDSQVTSTKSP. The segment covering 385-397 has biased composition (basic residues); that stretch reads PPRRRWRRTCKDC.

This is an uncharacterized protein from Rattus norvegicus (Rat).